The chain runs to 209 residues: Dual specificity protein phosphatase 22 (209 aa).

The region spanning 4-144 (GMNKILTGLF…LEDFGKCEVH (141 aa)) is the Tyrosine-protein phosphatase domain. Cys88 serves as the catalytic Phosphocysteine intermediate. The segment at 169-192 (LDKHKQQEAAESQNATSSGRQWNS) is disordered. A compositionally biased stretch (polar residues) spans 177–190 (AAESQNATSSGRQW).

It belongs to the protein-tyrosine phosphatase family. Non-receptor class dual specificity subfamily.

It is found in the cytoplasm. It localises to the nucleus. It catalyses the reaction O-phospho-L-tyrosyl-[protein] + H2O = L-tyrosyl-[protein] + phosphate. The catalysed reaction is O-phospho-L-seryl-[protein] + H2O = L-seryl-[protein] + phosphate. The enzyme catalyses O-phospho-L-threonyl-[protein] + H2O = L-threonyl-[protein] + phosphate. Activates the Jnk signaling pathway. Dephosphorylates and deactivates p38 and stress-activated protein kinase/c-Jun N-terminal kinase (SAPK/JNK). The chain is Dual specificity protein phosphatase 22 (dusp22) from Xenopus laevis (African clawed frog).